The following is a 536-amino-acid chain: Testis-specific expressed protein 55 (536 aa).

The segment covering 1–11 (MEEPPQEALAE) has biased composition (low complexity). Disordered regions lie at residues 1–287 (MEEP…PGTS) and 328–348 (SNAD…QTDH). The segment covering 35–52 (QKNQAERKADNHTAHRIA) has biased composition (basic and acidic residues). Composition is skewed to polar residues over residues 62 to 85 (QAES…STPG) and 105 to 136 (QVNQ…QVSG). Composition is skewed to basic and acidic residues over residues 138 to 158 (TEER…ERRT) and 173 to 222 (RGSR…ERRP). Positions 226-242 (IDSGSSVPSDQSPSVQI) are enriched in low complexity. The span at 243 to 255 (DSGSSVPSDQRPS) shows a compositional bias: polar residues. Residues 339-348 (HYTESDQTDH) show a composition bias toward basic and acidic residues.

Testis-specific.

It is found in the nucleus. The protein resides in the cell projection. It localises to the cilium. Its subcellular location is the flagellum. This Homo sapiens (Human) protein is Testis-specific expressed protein 55.